Consider the following 448-residue polypeptide: MANVVENLGKLERRVTISLPKETVQKEIDARIQKLAKNVRMPGFRPGKVPLKMVAQQYAGQVEAEVLSDKIGQEFFTISRAENLRVAGQPSFAPKQEQSDDAYAFDATFEVYPEVKIGDLSTAEVERSTTTIGDAEIDRTLDILRKQRVHFHARGEAGEHGDGGADTAAQNGDRVTVDFVGKIDDVAFPGGTAEDFPFVLGEGRMLPEFEQAALGLKAGESRTFELKFPDDYHGKDVAGKTAQFTVTMKKVEWPHLPEIDAEFAKSLGIEDGDLAKMRNEIKENLEREAKRRTQAIVKNQVMDALLKISELDVPKALIEQDQQRLVEMARQDLAQRGVPNAKDAPIPAEMFAEQAERRVKLGLVLAELVKANGLEAKPEQIRAEVDEFAKSYEDPKEVVRWYYSNQQRLAEMEAFVVESNVVDFVLGKAKVTDKEVSFEALASASAQA.

Residues 172–257 (GDRVTVDFVG…MKKVEWPHLP (86 aa)) form the PPIase FKBP-type domain.

Belongs to the FKBP-type PPIase family. Tig subfamily.

It is found in the cytoplasm. It carries out the reaction [protein]-peptidylproline (omega=180) = [protein]-peptidylproline (omega=0). Involved in protein export. Acts as a chaperone by maintaining the newly synthesized protein in an open conformation. Functions as a peptidyl-prolyl cis-trans isomerase. This Burkholderia multivorans (strain ATCC 17616 / 249) protein is Trigger factor.